A 419-amino-acid polypeptide reads, in one-letter code: Imidazolonepropionase (419 aa).

Positions 84 and 86 each coordinate Fe(3+). His84 and His86 together coordinate Zn(2+). Arg93, Tyr156, and His189 together coordinate 4-imidazolone-5-propanoate. Tyr156 serves as a coordination point for N-formimidoyl-L-glutamate. His254 serves as a coordination point for Fe(3+). Residue His254 participates in Zn(2+) binding. Gln257 is a 4-imidazolone-5-propanoate binding site. Fe(3+) is bound at residue Asp329. Asp329 is a Zn(2+) binding site. N-formimidoyl-L-glutamate contacts are provided by Asn331 and Gly333. 4-imidazolone-5-propanoate is bound at residue Thr334.

This sequence belongs to the metallo-dependent hydrolases superfamily. HutI family. Monomer. Forms a tightly packed homodimer in the crystal, but this seems to be an artifact of crystallization. Requires Zn(2+) as cofactor. Fe(3+) serves as cofactor.

The protein localises to the cytoplasm. The enzyme catalyses 4-imidazolone-5-propanoate + H2O = N-formimidoyl-L-glutamate. Its pathway is amino-acid degradation; L-histidine degradation into L-glutamate; N-formimidoyl-L-glutamate from L-histidine: step 3/3. In terms of biological role, catalyzes the hydrolytic cleavage of the carbon-nitrogen bond in imidazolone-5-propanoate to yield N-formimidoyl-L-glutamate. It is the third step in the universal histidine degradation pathway. This is Imidazolonepropionase from Agrobacterium fabrum (strain C58 / ATCC 33970) (Agrobacterium tumefaciens (strain C58)).